The following is a 1090-amino-acid chain: MSVYHLPTLLNPLVNAIFNCPEPERSPLKKLFANLKTRRFILLAPPSEYLLNYHDVKSKLPLHDLCYNAEFINSYILLMTENSYINTNSRDSHYETLDGKTVVIQWKNNVIHALNGFHIRRRLKILETKILPNFNDYFEGAADFIILFIDQPLNCEFVPNDYLQCFHNYEKIPKNAHAMPNLSIDSFQQERSSFENILHIHPARLTQLGQLFSSYRTLAPGDDPSRSIFESIVQQAFDGMKSDSLFKNFSNLYDLIHDYFELNLYDDIWSRLTTHFKGHEVDTEKYKYFSVNQLLTDFYSKDYGEFELHDITLIERRLHLASKHLQKLALTHSYAEKSKILVETLQKLSGTTEMDSHQLELPDGLNNMTMDADTLISLFVLVVCRSEQKHLKSHLYYLQNFSNNSSSTKFGILGYAVSTLEAVVCYFEDFNKNTGNVAKANTLCEKTKNLLDKLSCENPTNEVEDLATYKDILTYRNEQGQSILSICITNHKNYILLDILSEYETDFPVEDLLEDETIDGSTLLIESIKAGNLEAAKVLIKIMLFNCTEEELVSYINKTDKYARTVAHYLTHEMDILKSIGNYIDWKRKNSSGQTPLFSIFRSYDQPNYEEMVKTAFDIANTWYRKHNSLFDYLDHTDNKGNSLLHVLKTNIPILLQLTKLDINEENYKGLTPLMVYVKYKRLSNIDAITKDRRLILEKVQNSTFFTCFDYAKDHSVLSKIGERGVKDSLFGLIYFHSLRYHNLNATTNITSVSNAEKPFATTVINMKTIQGLLRSILKDNPFTFLPLNTYIDEISHLNRSDLTIIGKTDVTSLLHELTNCFNVLLFLKKIPENLFTDEASILYWMRINTSKRNQKPSGKENPKTMEPEEINMIQSFLRFNFDEISSFKASLNILRKVLIFINLKSDDFEDAYKGLNEMGRKLINSEASSAFKGIITNHNMFSELSLAELLENVRFLEQCTIQLSSFVQIILFEKIPNWWKHYGEFLALHKSYRKAFPNMVKPKSASDTSSRAPLGGFIETKREQSEQRLAVQIKASSKMLKELGSEIFVAHERLAEELSNYMEFRKACLDQRSLVAFATTNISVLQECV.

One can recognise a VPS9 domain in the interval 289 to 436 (FSVNQLLTDF…FEDFNKNTGN (148 aa)).

The protein belongs to the UPF0507 family.

In Saccharomyces cerevisiae (strain Lalvin EC1118 / Prise de mousse) (Baker's yeast), this protein is UPF0507 protein EC1118_1M3_1541g.